The chain runs to 426 residues: Serine--tRNA ligase (426 aa).

Residue 233–235 (TAE) coordinates L-serine. Residue 264–266 (RSE) participates in ATP binding. Position 287 (Glu287) interacts with L-serine. Residue 351–354 (EISS) participates in ATP binding. Ser387 is an L-serine binding site.

Belongs to the class-II aminoacyl-tRNA synthetase family. Type-1 seryl-tRNA synthetase subfamily. Homodimer. The tRNA molecule binds across the dimer.

The protein localises to the cytoplasm. It catalyses the reaction tRNA(Ser) + L-serine + ATP = L-seryl-tRNA(Ser) + AMP + diphosphate + H(+). The enzyme catalyses tRNA(Sec) + L-serine + ATP = L-seryl-tRNA(Sec) + AMP + diphosphate + H(+). It participates in aminoacyl-tRNA biosynthesis; selenocysteinyl-tRNA(Sec) biosynthesis; L-seryl-tRNA(Sec) from L-serine and tRNA(Sec): step 1/1. Catalyzes the attachment of serine to tRNA(Ser). Is also able to aminoacylate tRNA(Sec) with serine, to form the misacylated tRNA L-seryl-tRNA(Sec), which will be further converted into selenocysteinyl-tRNA(Sec). This Clostridium botulinum (strain Hall / ATCC 3502 / NCTC 13319 / Type A) protein is Serine--tRNA ligase.